Reading from the N-terminus, the 556-residue chain is Insulin-like growth factor 2 mRNA-binding protein 2 (556 aa).

2 RRM domains span residues 3-76 and 82-157; these read NKLY…YSVS and RKIQ…YIPD. A Phosphoserine modification is found at S11. The interval 156–188 is disordered; that stretch reads PDEEVSSPSPPQRAQRGDHSSREQGHAPGGTSQ. 2 positions are modified to phosphoserine: S162 and S164. Over residues 170-180 the composition is skewed to basic and acidic residues; that stretch reads QRGDHSSREQG. KH domains are found at residues 193 to 258, 274 to 341, 384 to 449, and 466 to 532; these read DFPL…CRMI, EIPL…EIEI, QEIV…QGRI, and KLEA…QRKI. At T507 the chain carries Phosphothreonine.

Belongs to the RRM IMP/VICKZ family. In terms of assembly, can form homooligomers and heterooligomers with IGF2BP1 and IGF2BP3 in an RNA-dependent manner. Interacts with HNRPD. Interacts with IGF2BP1. Interacts with ELAVL1, DHX9, HNRNPU, MATR3 and PABPC1.

It localises to the nucleus. The protein resides in the cytoplasm. The protein localises to the P-body. It is found in the stress granule. RNA-binding factor that recruits target transcripts to cytoplasmic protein-RNA complexes (mRNPs). This transcript 'caging' into mRNPs allows mRNA transport and transient storage. It also modulates the rate and location at which target transcripts encounter the translational apparatus and shields them from endonuclease attacks or microRNA-mediated degradation. Preferentially binds to N6-methyladenosine (m6A)-containing mRNAs and increases their stability. Binds to the 5'-UTR of the insulin-like growth factor 2 (IGF2) mRNAs. Binding is isoform-specific. Binds to beta-actin/ACTB and MYC transcripts. Increases MYC mRNA stability by binding to the coding region instability determinant (CRD) and binding is enhanced by m6A-modification of the CRD. The protein is Insulin-like growth factor 2 mRNA-binding protein 2 (IGF2BP2) of Pongo abelii (Sumatran orangutan).